The following is a 956-amino-acid chain: Endogenous retrovirus group K member 6 Pol protein (956 aa).

One can recognise a Reverse transcriptase domain in the interval 57–245 (LEKGHIEPSF…TPFHYLGMQI (189 aa)). Positions 161 to 164 (LPQG) match the LPQG motif. The YXDD signature appears at 195 to 198 (CIDD). Positions 460-590 (LENALTVFTD…ADLLVSSALI (131 aa)) constitute an RNase H type-1 domain. Residues D469, E497, D517, and D582 each contribute to the Mg(2+) site. Residues 587 to 628 (SALIKAQELHALTHVNAAGLKNKFDVTWKQAKDIVQHCTQCQ) form an Integrase-type zinc finger. 4 residues coordinate Zn(2+): H596, H600, C624, and C627. In terms of domain architecture, Integrase catalytic spans 642-803 (RGLCPNALWQ…TSAEQHLTGK (162 aa)). Positions 811-859 (KLIWWKDNKNKTWEIGKVITWGRGFACVSPGENQLPVWIPTRHLKFYNE) form a DNA-binding region, integrase-type. Residues 865-890 (KKSTSAETETSQSSTVDSQDEQNGDV) are disordered. A compositionally biased stretch (low complexity) spans 869–879 (SAETETSQSST).

This sequence belongs to the beta type-B retroviral polymerase family. HERV class-II K(HML-2) pol subfamily. Post-translationally, cleavage sites that yield the mature proteins remain to be determined.

It catalyses the reaction DNA(n) + a 2'-deoxyribonucleoside 5'-triphosphate = DNA(n+1) + diphosphate. The enzyme catalyses Endonucleolytic cleavage to 5'-phosphomonoester.. Early post-infection, the reverse transcriptase converts the viral RNA genome into double-stranded viral DNA. The RNase H domain of the reverse transcriptase performs two functions. It degrades the RNA template and specifically removes the RNA primer from the RNA/DNA hybrid. Following nuclear import, the integrase catalyzes the insertion of the linear, double-stranded viral DNA into the host cell chromosome. Endogenous Pol proteins may have kept, lost or modified their original function during evolution. This is Endogenous retrovirus group K member 6 Pol protein (ERVK-6) from Homo sapiens (Human).